The following is a 277-amino-acid chain: Ribonuclease HII (277 aa).

In terms of domain architecture, RNase H type-2 spans 72–260 (EYIAGIDEAG…IKEMIEMKKE (189 aa)). A divalent metal cation-binding residues include Asp-78, Glu-79, and Asp-170.

It belongs to the RNase HII family. Mn(2+) is required as a cofactor. Mg(2+) serves as cofactor.

It localises to the cytoplasm. It carries out the reaction Endonucleolytic cleavage to 5'-phosphomonoester.. Endonuclease that specifically degrades the RNA of RNA-DNA hybrids. The polypeptide is Ribonuclease HII (Geobacillus sp. (strain WCH70)).